The primary structure comprises 386 residues: GTPase Obg (386 aa).

The Obg domain occupies 1-159 (MKFVDEAVIR…RSLKLELMLL (159 aa)). The 174-residue stretch at 160–333 (ADVGLLGMPN…LSLKLVDFID (174 aa)) folds into the OBG-type G domain. Residues 166–173 (GMPNAGKS), 191–195 (FTTLV), 213–216 (DIPG), 283–286 (NKKD), and 314–316 (SAY) contribute to the GTP site. Residues Ser-173 and Thr-193 each coordinate Mg(2+). The segment at 356–375 (KDSDSLNEDFDDSDDDDFDD) is disordered. A compositionally biased stretch (acidic residues) spans 360–375 (SLNEDFDDSDDDDFDD).

The protein belongs to the TRAFAC class OBG-HflX-like GTPase superfamily. OBG GTPase family. In terms of assembly, monomer. The cofactor is Mg(2+).

It is found in the cytoplasm. In terms of biological role, an essential GTPase which binds GTP, GDP and possibly (p)ppGpp with moderate affinity, with high nucleotide exchange rates and a fairly low GTP hydrolysis rate. Plays a role in control of the cell cycle, stress response, ribosome biogenesis and in those bacteria that undergo differentiation, in morphogenesis control. The polypeptide is GTPase Obg (Shewanella sediminis (strain HAW-EB3)).